The following is a 449-amino-acid chain: Naphthalene 1,2-dioxygenase system, large oxygenase component (449 aa).

The region spanning 39 to 137 is the Rieske domain; that stretch reads WLFLTHDSLI…LDKKCMGLKE (99 aa). [2Fe-2S] cluster contacts are provided by C81, H83, C101, and H104. The Fe cation site is built by H208, H213, and D362.

Belongs to the bacterial ring-hydroxylating dioxygenase alpha subunit family. The naphthalene dioxygenase (NDO) multicomponent enzyme system is composed of an electron transfer component and a dioxygenase component (iron sulfur protein (ISP)). The electron transfer component is composed of a ferredoxin reductase (NdoR) and a ferredoxin (NdoA), and the dioxygenase component is formed of a heterohexamer (trimer of heterodimers) of three large alpha subunits (NdoB) and three small beta subunits (NdoC). The cofactor is [2Fe-2S] cluster. Fe(2+) serves as cofactor.

The catalysed reaction is naphthalene + NADH + O2 + H(+) = (1R,2S)-1,2-dihydronaphthalene-1,2-diol + NAD(+). Its pathway is aromatic compound metabolism; naphthalene degradation. In terms of biological role, component of the naphthalene dioxygenase (NDO) multicomponent enzyme system which catalyzes the incorporation of both atoms of molecular oxygen into naphthalene to form cis-(1R,2S)-dihydroxy-1,2-dihydronaphthalene. The alpha subunit has a catalytic role in the holoenzyme. This is Naphthalene 1,2-dioxygenase system, large oxygenase component from Pseudomonas aeruginosa.